An 82-amino-acid chain; its full sequence is Large ribosomal subunit protein bL27 (82 aa).

The tract at residues 1-21 (MAHKKGASSSRNGRDSNAKRL) is disordered.

It belongs to the bacterial ribosomal protein bL27 family.

The protein is Large ribosomal subunit protein bL27 of Tropheryma whipplei (strain Twist) (Whipple's bacillus).